Reading from the N-terminus, the 442-residue chain is CAAX prenyl protease 1 homolog (442 aa).

The Lumenal portion of the chain corresponds to 1–62 (MDASCLFKAL…KARDYKIDNH (62 aa)). A helical membrane pass occupies residues 63–83 (LFGFFHSWFNQLLLTAQLIGG). A topological domain (cytoplasmic) is located at residue Y84. Residues 85 to 105 (YPFLWYATASYPLHVAVFLSI) traverse the membrane as a helical segment. Topologically, residues 106 to 146 (NSIIETIIDLPWDLYSTFIIEDAHGFNKQTIGFYFVDKIKK) are lumenal. Residues 147–167 (MLVGFALTMPIVYGIEWIIVN) traverse the membrane as a helical segment. The Cytoplasmic portion of the chain corresponds to 168–170 (GGP). The chain crosses the membrane as a helical span at residues 171 to 191 (YFFVYIWLFVSVVVLLLMTIY). Residues 192-311 (PTFIAPLFDK…ELGHWALWHT (120 aa)) are Lumenal-facing. H301 lines the Zn(2+) pocket. E302 is a catalytic residue. H305 is a Zn(2+) binding site. A helical transmembrane segment spans residues 312–332 (LINLVITEVNLFFSFAVFGYF). The Cytoplasmic portion of the chain corresponds to 333-349 (YKWEALYQGFGYHDTPP). The helical transmembrane segment at 350 to 370 (VIGMMLIFQFVLALYNQLASI) threads the bilayer. Topologically, residues 371–442 (GMVIHSRSAE…AVRAFQAKNK (72 aa)) are lumenal. E380 is a binding site for Zn(2+). D384 serves as the catalytic Proton donor.

Belongs to the peptidase M48A family. Requires Zn(2+) as cofactor.

It localises to the endoplasmic reticulum membrane. It is found in the membrane. The catalysed reaction is Hydrolyzes the peptide bond -P2-(S-farnesyl or geranylgeranyl)C-P1'-P2'-P3'-COOH where P1' and P2' are amino acids with aliphatic side chains and P3' is any C-terminal residue.. Proteolytically removes the C-terminal three residues of farnesylated proteins. The polypeptide is CAAX prenyl protease 1 homolog (Caenorhabditis elegans).